Reading from the N-terminus, the 222-residue chain is GMP/IMP nucleotidase YrfG (222 aa).

Asp-9 (nucleophile) is an active-site residue. Mg(2+) contacts are provided by Asp-9 and Asp-11. Residues 9 to 11 (DVD) and Lys-149 contribute to the substrate site. A Mg(2+)-binding site is contributed by Asp-174.

This sequence belongs to the HAD-like hydrolase superfamily. It depends on Mg(2+) as a cofactor. Mn(2+) is required as a cofactor. The cofactor is Co(2+). Requires Zn(2+) as cofactor.

It catalyses the reaction a ribonucleoside 5'-phosphate + H2O = a ribonucleoside + phosphate. In terms of biological role, catalyzes the dephosphorylation of different purine nucleotides (GMP and IMP). Also hydrolyzes flavin mononucleotide (FMN). This chain is GMP/IMP nucleotidase YrfG (yrfG), found in Escherichia coli (strain K12).